The primary structure comprises 367 residues: Ferrochelatase (367 aa).

Residues H226 and E307 each contribute to the Fe cation site.

It belongs to the ferrochelatase family.

It is found in the cytoplasm. The enzyme catalyses heme b + 2 H(+) = protoporphyrin IX + Fe(2+). It participates in porphyrin-containing compound metabolism; protoheme biosynthesis; protoheme from protoporphyrin-IX: step 1/1. Functionally, catalyzes the ferrous insertion into protoporphyrin IX. The sequence is that of Ferrochelatase from Burkholderia pseudomallei (strain 668).